The chain runs to 350 residues: S-adenosylmethionine:tRNA ribosyltransferase-isomerase (350 aa).

It belongs to the QueA family. Monomer.

It localises to the cytoplasm. The catalysed reaction is 7-aminomethyl-7-carbaguanosine(34) in tRNA + S-adenosyl-L-methionine = epoxyqueuosine(34) in tRNA + adenine + L-methionine + 2 H(+). The protein operates within tRNA modification; tRNA-queuosine biosynthesis. Transfers and isomerizes the ribose moiety from AdoMet to the 7-aminomethyl group of 7-deazaguanine (preQ1-tRNA) to give epoxyqueuosine (oQ-tRNA). In Bacillus mycoides (strain KBAB4) (Bacillus weihenstephanensis), this protein is S-adenosylmethionine:tRNA ribosyltransferase-isomerase.